The following is a 337-amino-acid chain: MAVYKEAYPVDILEDDAEGYQAAAEAYYEMLREGAQTSAEVISLSTGEQVRLETSSLCFCTIYRDEPQHKILGLVNPQDTKTVVAVYLKESWWSIEDILRTSDPTREGLMKVQSFGERIVLFVLNVIVFGRLERRLHIDDMFFLPHPAKEQAKILWKDGAAVAFYSVKMKGSLCGDGTGTCYLLPVLDTVFVRRKNRCQGLGTAMLRDFCDTFQGDEALGISCPISPAMYRVLRQFLLTCPGERGRLWEVEPPGAWGQQRVNIWLKVYLQERRLQDGSTVHPKCSEEDTDTPGQASQEDGPTQFNHGESHKEWAVGEPERTQNGRRCAQVCEEARQV.

The segment at Ser278 to Arg326 is disordered. A compositionally biased stretch (polar residues) spans Thr291–His306. A compositionally biased stretch (basic and acidic residues) spans Gly307–Gln322.

This sequence belongs to the FAM169 family.

The protein is Protein FAM169B (Fam169b) of Mus musculus (Mouse).